Reading from the N-terminus, the 299-residue chain is MGAQLRVYTQKIKSAQTTKKITRAMELISASRIQKAQQRMAASAPYSRAVTRAVSAVATFSNVDHILTTEPEKVERAAIVIFASDRGLAGAFSSSVLKESEQLAELLRSQGKDIVYYLVGRKAVGYFKFRKRSSERIWTGSTEKPEFETAKSIGDALVEKFVTPASEGGVDEIHIVFNRFVSIATQKPEVVRLLPLEVVEGVEAPGEGAVLPLYEFEPEVGDVLDALLPVYIESRIFNAMLQSAASEHAARQKAMKSASDNADKLVTTYTRLRNNARQTEITQQISEIVGGADALASSK.

This sequence belongs to the ATPase gamma chain family. As to quaternary structure, F-type ATPases have 2 components, CF(1) - the catalytic core - and CF(0) - the membrane proton channel. CF(1) has five subunits: alpha(3), beta(3), gamma(1), delta(1), epsilon(1). CF(0) has three main subunits: a, b and c.

It localises to the cell membrane. Functionally, produces ATP from ADP in the presence of a proton gradient across the membrane. The gamma chain is believed to be important in regulating ATPase activity and the flow of protons through the CF(0) complex. In Clavibacter michiganensis subsp. michiganensis (strain NCPPB 382), this protein is ATP synthase gamma chain.